Here is a 148-residue protein sequence, read N- to C-terminus: Lysozyme C (148 aa).

Residues 1–18 form the signal peptide; sequence MKAPLLLGLLLLSVTVQG. In terms of domain architecture, C-type lysozyme spans 19 to 148; that stretch reads KVFERCDLAR…VSQYVRNCGV (130 aa). Intrachain disulfides connect Cys-24–Cys-146, Cys-48–Cys-134, Cys-83–Cys-99, and Cys-95–Cys-113. Residues Glu-53 and Asp-71 contribute to the active site.

The protein belongs to the glycosyl hydrolase 22 family. In terms of assembly, monomer.

The protein resides in the secreted. It catalyses the reaction Hydrolysis of (1-&gt;4)-beta-linkages between N-acetylmuramic acid and N-acetyl-D-glucosamine residues in a peptidoglycan and between N-acetyl-D-glucosamine residues in chitodextrins.. In terms of biological role, lysozymes have primarily a bacteriolytic function; those in tissues and body fluids are associated with the monocyte-macrophage system and enhance the activity of immunoagents. The sequence is that of Lysozyme C (LYZ) from Leptonychotes weddellii (Weddell seal).